The chain runs to 298 residues: MNTDDFGSAGEQARILAHALPFMRRYAGATVVVKYGGHAMGDERLAEQFGADIALLKQVGINPVVVHGGGPQINDMLKRLAIQSRFVDGLRVTDAAMVEVVEMVLAGTVNKMVAGLINRAGAMAVGICGKDGGLIHARKLQRTAIDPDSHIEKALDLGFVGEPAHIDVRVIHALTGAGLIPVIAPVGIGEDGQTYNINADSAAGAIAGALGAKRLLMLTDVPGVLDTDKKLIPEMSAADVKAGIADGTITGGMIPKVECCVDAVEKGVRGAVILDGRQPHACLLEMFTEGGIGTLIRG.

Residues 69-70 (GG), R91, and N196 each bind substrate.

The protein belongs to the acetylglutamate kinase family. ArgB subfamily.

Its subcellular location is the cytoplasm. It catalyses the reaction N-acetyl-L-glutamate + ATP = N-acetyl-L-glutamyl 5-phosphate + ADP. It functions in the pathway amino-acid biosynthesis; L-arginine biosynthesis; N(2)-acetyl-L-ornithine from L-glutamate: step 2/4. Catalyzes the ATP-dependent phosphorylation of N-acetyl-L-glutamate. The chain is Acetylglutamate kinase from Granulibacter bethesdensis (strain ATCC BAA-1260 / CGDNIH1).